The primary structure comprises 571 residues: Ubiquitin-like-specific protease 1C (571 aa).

A disordered region spans residues 221–260 (SESKDPKGDRRPNEAYGKGKPNESSPYLLVDDDDGDDDKV). The span at 222–233 (ESKDPKGDRRPN) shows a compositional bias: basic and acidic residues. Residues H426, D449, and C512 contribute to the active site.

The protein belongs to the peptidase C48 family.

The protein resides in the nucleus. The protein localises to the nucleoplasm. Functionally, protease that catalyzes two essential functions in the SUMO pathway: processing of full-length SUMOs to their mature forms and deconjugation of SUMO from targeted proteins. Cleaves precursors of SUM1 and SUM2, but not of SUM3 or SUM5. Able to release SUM1 and SUM2 from conjugates, but unable to cleave SUM3. Protease activity mainly directed at deconjugating SUM1 and SUM2 from their target proteins. Regulates salt stress responses and flowering time. Redundant with ULP1D. The sequence is that of Ubiquitin-like-specific protease 1C (ULP1C) from Arabidopsis thaliana (Mouse-ear cress).